The sequence spans 190 residues: Probable nicotinate-nucleotide adenylyltransferase (190 aa).

It belongs to the NadD family.

It catalyses the reaction nicotinate beta-D-ribonucleotide + ATP + H(+) = deamido-NAD(+) + diphosphate. It functions in the pathway cofactor biosynthesis; NAD(+) biosynthesis; deamido-NAD(+) from nicotinate D-ribonucleotide: step 1/1. In terms of biological role, catalyzes the reversible adenylation of nicotinate mononucleotide (NaMN) to nicotinic acid adenine dinucleotide (NaAD). The polypeptide is Probable nicotinate-nucleotide adenylyltransferase (Borrelia turicatae (strain 91E135)).